Here is a 120-residue protein sequence, read N- to C-terminus: Glycine cleavage system H protein (120 aa).

Positions 17–99 constitute a Lipoyl-binding domain; that stretch reads IATVGITSHA…QGAGWFFKLK (83 aa). Lys-58 bears the N6-lipoyllysine mark.

It belongs to the GcvH family. The glycine cleavage system is composed of four proteins: P, T, L and H. Requires (R)-lipoate as cofactor.

The glycine cleavage system catalyzes the degradation of glycine. The H protein shuttles the methylamine group of glycine from the P protein to the T protein. This is Glycine cleavage system H protein from Agrobacterium fabrum (strain C58 / ATCC 33970) (Agrobacterium tumefaciens (strain C58)).